Consider the following 220-residue polypeptide: Large ribosomal subunit protein bL25 (220 aa).

Residues 186-199 (ELEDEDEDEDEVAA) show a composition bias toward acidic residues. Positions 186 to 220 (ELEDEDEDEDEVAADEVPATEVDDQAAVKEGEGKE) are disordered. Over residues 211–220 (AAVKEGEGKE) the composition is skewed to basic and acidic residues.

This sequence belongs to the bacterial ribosomal protein bL25 family. CTC subfamily. In terms of assembly, part of the 50S ribosomal subunit; part of the 5S rRNA/L5/L18/L25 subcomplex. Contacts the 5S rRNA. Binds to the 5S rRNA independently of L5 and L18.

Functionally, this is one of the proteins that binds to the 5S RNA in the ribosome where it forms part of the central protuberance. This Christiangramia forsetii (strain DSM 17595 / CGMCC 1.15422 / KT0803) (Gramella forsetii) protein is Large ribosomal subunit protein bL25.